Reading from the N-terminus, the 192-residue chain is uncharacterized protein (192 aa).

One can recognise a Nudix hydrolase domain in the interval 29-160 (HRQAAVLIPI…PLDIYRRGDS (132 aa)). A Nudix box motif is present at residues 67-89 (GAVDDTDASVIAAALREAEEEVA). Mg(2+)-binding residues include Glu-83 and Glu-87.

Belongs to the Nudix hydrolase family. PCD1 subfamily. Mn(2+) is required as a cofactor. It depends on Mg(2+) as a cofactor.

Functionally, probably mediates the hydrolysis of some nucleoside diphosphate derivatives. This is an uncharacterized protein from Shigella flexneri.